Here is a 141-residue protein sequence, read N- to C-terminus: KETAAAKFRRQHMDSGSSSSSNSNYCNQMMKRRRMTHGRCKPVNTFVHESLADVKAVCSQKNITCKNGQPNCYQSNSTMNITDCRETGSSKYPNCAYKTSQKQKYITVACEGNPYVPVHFDGSVLLPATSTQAQAPLARGQ.

The segment at 1–25 is disordered; it reads KETAAAKFRRQHMDSGSSSSSNSNY. Substrate is bound by residues Lys-7 and Arg-10. His-12 acts as the Proton acceptor in catalysis. Over residues 15-24 the composition is skewed to low complexity; that stretch reads SGSSSSSNSN. Disulfide bonds link Cys-26–Cys-84, Cys-40–Cys-95, Cys-58–Cys-110, and Cys-65–Cys-72. 41–45 is a substrate binding site; it reads KPVNT. A glycan (N-linked (GlcNAc...) asparagine) is linked at Asn-62. Lys-66 and Arg-85 together coordinate substrate. His-119 acts as the Proton donor in catalysis. Thr-129 carries an O-linked (GalNAc...) threonine glycan.

The protein belongs to the pancreatic ribonuclease family.

It is found in the secreted. This Giraffa camelopardalis (Giraffe) protein is Brain ribonuclease (BRN).